Here is a 318-residue protein sequence, read N- to C-terminus: Bifunctional protein FolD 3 (318 aa).

NADP(+) contacts are provided by residues 173–175 (GRS) and I242.

This sequence belongs to the tetrahydrofolate dehydrogenase/cyclohydrolase family. In terms of assembly, homodimer.

The enzyme catalyses (6R)-5,10-methylene-5,6,7,8-tetrahydrofolate + NADP(+) = (6R)-5,10-methenyltetrahydrofolate + NADPH. It carries out the reaction (6R)-5,10-methenyltetrahydrofolate + H2O = (6R)-10-formyltetrahydrofolate + H(+). It functions in the pathway one-carbon metabolism; tetrahydrofolate interconversion. In terms of biological role, catalyzes the oxidation of 5,10-methylenetetrahydrofolate to 5,10-methenyltetrahydrofolate and then the hydrolysis of 5,10-methenyltetrahydrofolate to 10-formyltetrahydrofolate. This chain is Bifunctional protein FolD 3, found in Rubrobacter xylanophilus (strain DSM 9941 / JCM 11954 / NBRC 16129 / PRD-1).